A 222-amino-acid polypeptide reads, in one-letter code: Cytidylate kinase (222 aa).

7-15 is a binding site for ATP; sequence GPSASGKSS.

The protein belongs to the cytidylate kinase family. Type 1 subfamily.

It is found in the cytoplasm. The enzyme catalyses CMP + ATP = CDP + ADP. It carries out the reaction dCMP + ATP = dCDP + ADP. This is Cytidylate kinase from Borrelia turicatae (strain 91E135).